The primary structure comprises 70 residues: DNA-directed RNA polymerases I, II, and III subunit rpabc5 (70 aa).

The Zn(2+) site is built by C7, C10, C44, and C45.

The protein belongs to the archaeal Rpo10/eukaryotic RPB10 RNA polymerase subunit family. In terms of assembly, component of the RNA polymerase I (Pol I), RNA polymerase II (Pol II) and RNA polymerase III (Pol III) complexes.

It is found in the nucleus. Its function is as follows. DNA-dependent RNA polymerase catalyzes the transcription of DNA into RNA using the four ribonucleoside triphosphates as substrates. Common component of RNA polymerases I, II and III which synthesize ribosomal RNA precursors, mRNA precursors and many functional non-coding RNAs, and a small RNAs, such as 5S rRNA and tRNAs, respectively. Pol II is the central component of the basal RNA polymerase II transcription machinery. Pols are composed of mobile elements that move relative to each other. In Pol II, RBP10 is part of the core element with the central large cleft. This Dictyostelium discoideum (Social amoeba) protein is DNA-directed RNA polymerases I, II, and III subunit rpabc5 (polr2l).